Reading from the N-terminus, the 199-residue chain is Dephospho-CoA kinase (199 aa).

In terms of domain architecture, DPCK spans 3-199 (VLGLTGSIGM…AAARMPRRRP (197 aa)). Position 11–16 (11–16 (GMGKST)) interacts with ATP.

It belongs to the CoaE family.

The protein resides in the cytoplasm. The catalysed reaction is 3'-dephospho-CoA + ATP = ADP + CoA + H(+). Its pathway is cofactor biosynthesis; coenzyme A biosynthesis; CoA from (R)-pantothenate: step 5/5. Catalyzes the phosphorylation of the 3'-hydroxyl group of dephosphocoenzyme A to form coenzyme A. In Rhodopseudomonas palustris (strain HaA2), this protein is Dephospho-CoA kinase.